A 234-amino-acid chain; its full sequence is Transmembrane protein 65 (234 aa).

A mitochondrion-targeting transit peptide spans 1–55 (MSRLLPLLGSRTARSLRPGPAAAPRLPSWCCCGRGLLALGVPGGPRLLGTHPKKE). The Cytoplasmic segment spans residues 56–110 (PMEALNTAQGARDFIYSLHSTERSCLLKELHRFESIAIAQEKLEALPPTPGQLRY). A helical transmembrane segment spans residues 111–131 (VFFHNAIPFVGFGFLDNAIMI). At 132 to 138 (VAGTQIE) the chain is on the extracellular side. The helical transmembrane segment at 139-159 (LSIGIILGISTMAAAALGNLV) threads the bilayer. Residues 160 to 203 (SDLAGLGLAGYVEALASRLGLSIPDLTPKQVDMWQTRVSTHLGK) lie on the Cytoplasmic side of the membrane. The chain crosses the membrane as a helical span at residues 204-224 (AVGVTIGCILGMFPLIFFGGS). Residues 225-234 (EEDEKLETTN) lie on the Extracellular side of the membrane.

In terms of assembly, monomer. Homodimer. Interacts with GJA1. Interacts weakly with DSP. Interacts with SCN1B. In terms of tissue distribution, predominantly expressed in the ventricular tissue (at protein level).

Its subcellular location is the cell membrane. The protein resides in the mitochondrion inner membrane. Essential for maintaining proper cardiac intercalated disk (ICD) structure and function as well as cardiac conduction velocity in the heart. Its association with SCN1B is required for stabilizing the perinexus in the ICD and for localization of GJA1 and SCN5A to the ICD. May regulate the function of the gap junction protein GJA1 and may contribute to the stability and proper localization of GJA1 to cardiac intercalated disk thereby regulating gap junction communication. Regulates mitochondrial respiration and mitochondrial DNA copy number maintenance. The protein is Transmembrane protein 65 (Tmem65) of Mus musculus (Mouse).